The following is a 397-amino-acid chain: MKYAVLIGDGMADYPIEELGSRTILQAARTPAMDSIAARGKTGLAKTVPEGFPPGSDVANMSIFGYDPAIYYSGRAPLEAASMGVALAADDVAFRCNLITIENGKIKDYSAGHISSDEAEILIDTLDSELRTEKVRFYPGISYRHLIVAGNDLGAETECTPPHDITGERKDDYLPRGKDGEFFSGLIEASTVVLELHPVNLKRVQEGKNPANSIWVWGQGYAPKFKTFQELYGKSGAIISAVDLLKGIGIYAGLDVIEVPGATGYLDTNYEGKASAAIEALKTRDLVFVHVEAPDEAGHEGSLEKKMKAIEDFDSRIVSPILKHAEASDETFTILVLPDHPTPISVKTHTRDPIPFAIYRTDAADPDGVEYFDEESVKNGSMGLVKASDLIGMLVKV.

This sequence belongs to the BPG-independent phosphoglycerate mutase family. A-PGAM subfamily.

It carries out the reaction (2R)-2-phosphoglycerate = (2R)-3-phosphoglycerate. The protein operates within carbohydrate degradation; glycolysis; pyruvate from D-glyceraldehyde 3-phosphate: step 3/5. Functionally, catalyzes the interconversion of 2-phosphoglycerate and 3-phosphoglycerate. This Methanosarcina acetivorans (strain ATCC 35395 / DSM 2834 / JCM 12185 / C2A) protein is 2,3-bisphosphoglycerate-independent phosphoglycerate mutase.